The sequence spans 495 residues: Tyrosine 3-monooxygenase (495 aa).

At Ser19 the chain carries Phosphoserine; by CaMK2. Ser31 carries the post-translational modification Phosphoserine. Position 40 is a phosphoserine; by CaMK2 and PKA (Ser40). Over residues 41–53 (LIEDARKEREKAE) the composition is skewed to basic and acidic residues. Residues 41 to 65 (LIEDARKEREKAEAASAASSEPGDL) are disordered. Residues His328, His333, and Glu373 each contribute to the Fe cation site. At Ser469 the chain carries Phosphoserine.

This sequence belongs to the biopterin-dependent aromatic amino acid hydroxylase family. As to quaternary structure, homotetramer. Interacts (when phosphorylated at Ser-19) with YWHAG; one YWHAG dimer bounds to one TH tetramer this interaction may influence the phosphorylation and dephosphorylation of other sites. Fe(2+) is required as a cofactor. Post-translationally, phosphorylated on Ser-19, Ser-31 and Ser-40 by several protein kinases with different site specificities. Phosphorylation at Ser-31 and Ser-40 leads to an increase of TH activity. Phosphorylation at Ser-40 activates the enzyme and also counteracts the feedback inhibition of TH by catecholamines. Phosphorylation of Ser-19 and Ser-31 triggers the proteasomal degradation of TH through the ubiquitin-proteasome pathway. Phosphorylation at Ser-31 facilitates transport of TH from the soma to the nerve terminals via the microtubule network. Phosphorylation at Ser-19 induces the high-affinity binding to the 14-3-3 protein YWHAG; this interaction may influence the phosphorylation and dephosphorylation of other sites. Ser-19 increases the phosphorylation at Ser-40 in a hierarchical manner, leading to increased activity.

It localises to the cytoplasm. Its subcellular location is the perinuclear region. It is found in the nucleus. The protein resides in the cell projection. The protein localises to the axon. It localises to the cytoplasmic vesicle. Its subcellular location is the secretory vesicle. It is found in the synaptic vesicle. The enzyme catalyses (6R)-L-erythro-5,6,7,8-tetrahydrobiopterin + L-tyrosine + O2 = (4aS,6R)-4a-hydroxy-L-erythro-5,6,7,8-tetrahydrobiopterin + L-dopa. Its pathway is catecholamine biosynthesis; dopamine biosynthesis; dopamine from L-tyrosine: step 1/2. Its activity is regulated as follows. Inhibited in feedback fashion by the catecholamine neurotransmitters, especially by dopamine in competition with tetrahydrobiopterin. Phosphorylation of several Ser/Thr residues in the N-terminus regulates the catalytic activity. Ser-31 and Ser-40 are readily phosphorylated to activate the catalytic activity. A Cysteine modification induced by N-ethylmaleimide (NEM), inhibits tyrosine 3-monooxygenase activity through the modification of the Cys-174. Catalyzes the conversion of L-tyrosine to L-dihydroxyphenylalanine (L-Dopa), the rate-limiting step in the biosynthesis of cathecolamines, dopamine, noradrenaline, and adrenaline. Uses tetrahydrobiopterin and molecular oxygen to convert tyrosine to L-Dopa. In addition to tyrosine, is able to catalyze the hydroxylation of phenylalanine and tryptophan with lower specificity. Positively regulates the regression of retinal hyaloid vessels during postnatal development. This chain is Tyrosine 3-monooxygenase (TH), found in Canis lupus familiaris (Dog).